Consider the following 346-residue polypeptide: FMRFamide-related peptides type HF-1 (346 aa).

Residues 1 to 19 form the signal peptide; that stretch reads MTSLCLTIAPAVLSLICLS. The propeptide occupies 20 to 45; it reads SYGWAEDNNGIHTLDDGDNDPFFRHN. Phenylalanine 51 carries the phenylalanine amide modification. Residues 54–94 constitute a propeptide that is removed on maturation; sequence AFVPLWDNADDSLVRKNLLTHWSEFPLSPALSSSDVFSRNS. Position 100 is a phenylalanine amide (phenylalanine 100). Residues 103-109 constitute a propeptide that is removed on maturation; it reads SYPPYQD. The residue at position 115 (phenylalanine 115) is a Phenylalanine amide. Residues 118 to 203 constitute a propeptide that is removed on maturation; it reads SHQPDIDEYL…EILSNEDDLE (86 aa). Residues 137 to 185 are disordered; it reads YRKRRSEDGDSKEDGLNRVARSADANQQSKNTQSNKFGKDLQKRETKKE. The span at 141–152 shows a compositional bias: basic and acidic residues; it reads RSEDGDSKEDGL. Polar residues predominate over residues 160–172; sequence DANQQSKNTQSNK. Residues 173–185 show a composition bias toward basic and acidic residues; the sequence is FGKDLQKRETKKE. Phenylalanine 209 and phenylalanine 216 each carry phenylalanine amide. A propeptide spanning residues 219–226 is cleaved from the precursor; that stretch reads GDEDESYD. Phenylalanine 232 carries the post-translational modification Phenylalanine amide. Residues 235-243 constitute a propeptide that is removed on maturation; sequence SLRHDQEFE. 2 positions are modified to phenylalanine amide: phenylalanine 249 and phenylalanine 256. Positions 259–267 are excised as a propeptide; sequence GDEDDAREE. Phenylalanine 273 carries the phenylalanine amide modification. A propeptide spanning residues 276–283 is cleaved from the precursor; sequence SSNEDEDI. Phenylalanine 290 carries the post-translational modification Phenylalanine amide. Positions 293 to 301 are excised as a propeptide; sequence SGNEDGDVD. Phenylalanine amide occurs at positions 307 and 314. Residues 317–325 constitute a propeptide that is removed on maturation; that stretch reads SEKEDGDVD. 2 positions are modified to phenylalanine amide: phenylalanine 331 and phenylalanine 338. The propeptide occupies 341-346; the sequence is GDSETS.

Belongs to the FARP (FMRFamide related peptide) family. Central nervous system.

It localises to the secreted. Its function is as follows. Can function as both cardioregulatory hormones and transmitters and may regulate cardiovascular function. This chain is FMRFamide-related peptides type HF-1, found in Cornu aspersum (Brown garden snail).